A 476-amino-acid chain; its full sequence is Ribulose bisphosphate carboxylase large chain (476 aa).

A propeptide spanning residues 1 to 2 (MS) is cleaved from the precursor. Position 3 is an N-acetylproline (P3). Residue K14 is modified to N6,N6,N6-trimethyllysine. Positions 123 and 173 each coordinate substrate. K175 functions as the Proton acceptor in the catalytic mechanism. A substrate-binding site is contributed by K177. K201, D203, and E204 together coordinate Mg(2+). The residue at position 201 (K201) is an N6-carboxylysine. Catalysis depends on H294, which acts as the Proton acceptor. Positions 295, 327, and 379 each coordinate substrate.

The protein belongs to the RuBisCO large chain family. Type I subfamily. In terms of assembly, heterohexadecamer of 8 large chains and 8 small chains; disulfide-linked. The disulfide link is formed within the large subunit homodimers. Requires Mg(2+) as cofactor. Post-translationally, the disulfide bond which can form in the large chain dimeric partners within the hexadecamer appears to be associated with oxidative stress and protein turnover.

The protein resides in the plastid. It is found in the chloroplast. The enzyme catalyses 2 (2R)-3-phosphoglycerate + 2 H(+) = D-ribulose 1,5-bisphosphate + CO2 + H2O. The catalysed reaction is D-ribulose 1,5-bisphosphate + O2 = 2-phosphoglycolate + (2R)-3-phosphoglycerate + 2 H(+). Functionally, ruBisCO catalyzes two reactions: the carboxylation of D-ribulose 1,5-bisphosphate, the primary event in carbon dioxide fixation, as well as the oxidative fragmentation of the pentose substrate in the photorespiration process. Both reactions occur simultaneously and in competition at the same active site. This Phaseolus vulgaris (Kidney bean) protein is Ribulose bisphosphate carboxylase large chain.